We begin with the raw amino-acid sequence, 97 residues long: Protein RESPONSE TO LOW SULFUR 3 (97 aa).

A coiled-coil region spans residues 8–42 (VTVAAEEVEELRRRNGELEREMEEMKKEMVQLWRR).

This is Protein RESPONSE TO LOW SULFUR 3 from Arabidopsis thaliana (Mouse-ear cress).